We begin with the raw amino-acid sequence, 165 residues long: Nicotine 6-hydroxylase small subunit (165 aa).

The 77-residue stretch at 10-86 (VEIDVEVNGR…GRSIRTVEDL (77 aa)) folds into the 2Fe-2S ferredoxin-type domain. The [2Fe-2S] cluster site is built by cysteine 48, cysteine 53, cysteine 56, and cysteine 68.

In terms of assembly, heterotrimer composed of a large subunit (NdhL), a medium subunit (NdhM) and a small subunit (NdhS). The cofactor is [2Fe-2S] cluster.

The protein resides in the cytoplasm. The catalysed reaction is (R)-nicotine + A + H2O = (R)-6-hydroxynicotine + AH2. It carries out the reaction (S)-nicotine + A + H2O = (S)-6-hydroxynicotine + AH2. Its pathway is alkaloid degradation; nicotine degradation; 6-hydroxypseudooxynicotine from nicotine (R-isomer route): step 1/2. The protein operates within alkaloid degradation; nicotine degradation; 6-hydroxypseudooxynicotine from nicotine (S-isomer route): step 1/2. With respect to regulation, nicotine dehydrogenase activity is inhibited by tungsten. Its function is as follows. Component of the nicotine 6-hydroxylase, which is involved in the degradation of nicotine. Catalyzes the hydroxylation of the pyridine ring at C6 to form 6-hydroxynicotine. Can use both L-nicotine and D-nicotine. In Paenarthrobacter nicotinovorans (Arthrobacter nicotinovorans), this protein is Nicotine 6-hydroxylase small subunit.